The primary structure comprises 209 residues: Large ribosomal subunit protein uL3 (209 aa).

Positions 127 to 151 (SGGPSSHGSKFHRHLGGTGQATTPA) are disordered.

The protein belongs to the universal ribosomal protein uL3 family. Part of the 50S ribosomal subunit. Forms a cluster with proteins L14 and L19.

Functionally, one of the primary rRNA binding proteins, it binds directly near the 3'-end of the 23S rRNA, where it nucleates assembly of the 50S subunit. This chain is Large ribosomal subunit protein uL3, found in Borrelia duttonii (strain Ly).